A 1462-amino-acid polypeptide reads, in one-letter code: Trifunctional nucleotide phosphoesterase protein YfkN (1462 aa).

The N-terminal stretch at Met-1 to Ala-35 is a signal peptide. The 2',3'-cyclic nucleotide 2'-phosphodiesterase/3'-nucleotidase stretch occupies residues Glu-36–Leu-623. 7 residues coordinate a divalent metal cation: Asp-52, His-54, Asp-97, Asn-141, His-249, His-282, and His-284. A ribonucleoside 3'-phosphate contacts are provided by residues Tyr-458 and Tyr-561–Gly-567. The interval Leu-624–Thr-1427 is 5'-nucleotidase. Residues Asp-676, His-678, Asp-708, Asn-740, His-872, His-895, and His-897 each contribute to the a divalent metal cation site. Residues Phe-1047 and Phe-1127 to Asp-1133 each bind a ribonucleoside 5'-phosphate. The disordered stretch occupies residues Ile-1350–Gly-1422. Residues Gly-1405–Gly-1421 show a composition bias toward gly residues. Residues Leu-1424–Ala-1428 carry the LPXTG sorting signal motif. Thr-1427 bears the Pentaglycyl murein peptidoglycan amidated threonine mark. A propeptide spans Ala-1428–Ala-1462 (removed by sortase).

It belongs to the 5'-nucleotidase family. It depends on a divalent metal cation as a cofactor.

It localises to the secreted. It is found in the cell wall. The enzyme catalyses a nucleoside 2',3'-cyclic phosphate + H2O = a nucleoside 3'-phosphate + H(+). It catalyses the reaction a ribonucleoside 3'-phosphate + H2O = a ribonucleoside + phosphate. It carries out the reaction a ribonucleoside 5'-phosphate + H2O = a ribonucleoside + phosphate. In terms of biological role, catalyzes the release of inorganic phosphate from 2',3'-cyclic nucleotides through consecutive 2',3'-phosphodiesterase and 3'- (or 2') nucleotidase activities. Also possesses a 5'-nucleotidase activity. Does not catalyze the release of inorganic phosphate from 3',5'-cyclic nucleotides. Probably plays a role in the cellular reprocessing of nucleotides present in the medium, under conditions of phosphate shortage. The sequence is that of Trifunctional nucleotide phosphoesterase protein YfkN (yfkN) from Bacillus subtilis (strain 168).